The following is a 67-amino-acid chain: uncharacterized protein (67 aa).

This is an uncharacterized protein from Acidianus sp. F28 (AFV-2).